Reading from the N-terminus, the 97-residue chain is Large ribosomal subunit protein uL23 (97 aa).

Belongs to the universal ribosomal protein uL23 family. As to quaternary structure, part of the 50S ribosomal subunit. Contacts protein L29, and trigger factor when it is bound to the ribosome.

Functionally, one of the early assembly proteins it binds 23S rRNA. One of the proteins that surrounds the polypeptide exit tunnel on the outside of the ribosome. Forms the main docking site for trigger factor binding to the ribosome. In Marinobacter nauticus (strain ATCC 700491 / DSM 11845 / VT8) (Marinobacter aquaeolei), this protein is Large ribosomal subunit protein uL23.